The sequence spans 250 residues: Probable replication-associated protein repA2 (250 aa).

This sequence belongs to the IncFII RepA family.

In terms of biological role, this protein is essential for plasmid replication; it is involved in copy control functions. This chain is Probable replication-associated protein repA2 (repA2), found in Buchnera aphidicola subsp. Acyrthosiphon pisum (strain APS) (Acyrthosiphon pisum symbiotic bacterium).